Here is a 211-residue protein sequence, read N- to C-terminus: DNA-directed RNA polymerases I, II, and III subunit RPABC1 (211 aa).

Belongs to the archaeal Rpo5/eukaryotic RPB5 RNA polymerase subunit family. Component of the RNA polymerase I (Pol I), RNA polymerase II (Pol II) and RNA polymerase III (Pol III) complexes consisting of at least 13, 12 and 17 subunits, respectively. In RNA Pol II, this subunit is present in 2-fold molar excess over the other subunits.

The protein resides in the nucleus. Functionally, DNA-dependent RNA polymerase catalyzes the transcription of DNA into RNA using the four ribonucleoside triphosphates as substrates. Common component of RNA polymerases I, II and III which synthesize ribosomal RNA precursors, mRNA precursors and many functional non-coding RNAs, and small RNAs, such as 5S rRNA and tRNAs, respectively. Pol II is the central component of the basal RNA polymerase II transcription machinery. Pols are composed of mobile elements that move relative to each other. In Pol II, RPB5 is part of the lower jaw surrounding the central large cleft and thought to grab the incoming DNA template. Seems to be the major component in this process. In Caenorhabditis elegans, this protein is DNA-directed RNA polymerases I, II, and III subunit RPABC1 (rpb-5).